Reading from the N-terminus, the 364-residue chain is MKKAILMMTFGSPEEITFEGVADFFTNIRRGVRPQDHEIQTLYDNYVRIGGTPLQKITHQEVALVEARLGNEYSVYFANKFSSPFIPDVIGQMEADGIEQCICLILEPHYSFYSVMGYEKFLESKQIQFLVIKDWYQEEALLNYWADEIAKILKEEVKQDSFKIIFSAHSVPIFALDFGDPYIDQIFENSKLVVEKLGLSSEQYTNTWQSESDIGIPWIKPDVLEYLREQTAHPDHYIFVPISFISEHIEVLFDNDVECYDLCQEFGVNYHRPPMPNTDSRLIDALVNTVRVNENQEFKEFLPEEETFDELVPSDETKNILAESEDLQMPEFVKKLIEKKGRENVKMPYLIKKMLEKAGKLPKE.

Fe-coproporphyrin III-binding residues include R29 and Y118. Fe(2+) is bound by residues H169 and E250.

It belongs to the ferrochelatase family.

The protein localises to the cytoplasm. It carries out the reaction Fe-coproporphyrin III + 2 H(+) = coproporphyrin III + Fe(2+). The protein operates within porphyrin-containing compound metabolism; protoheme biosynthesis. In terms of biological role, involved in coproporphyrin-dependent heme b biosynthesis. Catalyzes the insertion of ferrous iron into coproporphyrin III to form Fe-coproporphyrin III. The protein is Coproporphyrin III ferrochelatase of Streptococcus pneumoniae (strain 70585).